The chain runs to 437 residues: GTPase Obg (437 aa).

One can recognise an Obg domain in the interval 2–160; that stretch reads SMFLDTAKIS…RQLELELKIL (159 aa). Residues 161–338 form the OBG-type G domain; the sequence is ADVGLVGFPS…LLEATAELLA (178 aa). Residues 167–174, 192–196, 214–217, 284–287, and 319–321 contribute to the GTP site; these read GFPSVGKS, FTTIV, DLPG, NKMD, and SSL. Mg(2+) is bound by residues S174 and T194. An OCT domain is found at 359-437; that stretch reads GFAKTEKDFE…IGKFEFEFVD (79 aa).

Belongs to the TRAFAC class OBG-HflX-like GTPase superfamily. OBG GTPase family. Monomer. It depends on Mg(2+) as a cofactor.

It is found in the cytoplasm. In terms of biological role, an essential GTPase which binds GTP, GDP and possibly (p)ppGpp with moderate affinity, with high nucleotide exchange rates and a fairly low GTP hydrolysis rate. Plays a role in control of the cell cycle, stress response, ribosome biogenesis and in those bacteria that undergo differentiation, in morphogenesis control. This is GTPase Obg from Streptococcus pyogenes serotype M2 (strain MGAS10270).